We begin with the raw amino-acid sequence, 218 residues long: Thiamine-phosphate synthase (218 aa).

4-amino-2-methyl-5-(diphosphooxymethyl)pyrimidine contacts are provided by residues 43 to 47 (QFRDK) and Asn-78. Positions 79 and 98 each coordinate Mg(2+). Residue Ser-117 participates in 4-amino-2-methyl-5-(diphosphooxymethyl)pyrimidine binding. 143-145 (TNS) contacts 2-[(2R,5Z)-2-carboxy-4-methylthiazol-5(2H)-ylidene]ethyl phosphate. Lys-146 lines the 4-amino-2-methyl-5-(diphosphooxymethyl)pyrimidine pocket. 2-[(2R,5Z)-2-carboxy-4-methylthiazol-5(2H)-ylidene]ethyl phosphate is bound by residues Gly-174 and 194–195 (IS).

This sequence belongs to the thiamine-phosphate synthase family. It depends on Mg(2+) as a cofactor.

The catalysed reaction is 2-[(2R,5Z)-2-carboxy-4-methylthiazol-5(2H)-ylidene]ethyl phosphate + 4-amino-2-methyl-5-(diphosphooxymethyl)pyrimidine + 2 H(+) = thiamine phosphate + CO2 + diphosphate. The enzyme catalyses 2-(2-carboxy-4-methylthiazol-5-yl)ethyl phosphate + 4-amino-2-methyl-5-(diphosphooxymethyl)pyrimidine + 2 H(+) = thiamine phosphate + CO2 + diphosphate. It catalyses the reaction 4-methyl-5-(2-phosphooxyethyl)-thiazole + 4-amino-2-methyl-5-(diphosphooxymethyl)pyrimidine + H(+) = thiamine phosphate + diphosphate. The protein operates within cofactor biosynthesis; thiamine diphosphate biosynthesis; thiamine phosphate from 4-amino-2-methyl-5-diphosphomethylpyrimidine and 4-methyl-5-(2-phosphoethyl)-thiazole: step 1/1. Functionally, condenses 4-methyl-5-(beta-hydroxyethyl)thiazole monophosphate (THZ-P) and 2-methyl-4-amino-5-hydroxymethyl pyrimidine pyrophosphate (HMP-PP) to form thiamine monophosphate (TMP). In Lactococcus lactis subsp. cremoris (strain SK11), this protein is Thiamine-phosphate synthase.